The following is an 857-amino-acid chain: Zinc finger protein 574 (857 aa).

14 consecutive C2H2-type zinc fingers follow at residues 15-37 (YVCS…QQSH), 58-80 (YQCL…QELH), 99-121 (YECP…RYTH), 206-228 (YKCS…QGTH), 297-319 (FSCG…QISH), 324-346 (FSCP…LKSH), 352-374 (YLCV…RRSH), 380-401 (FTCE…RRVH), 428-451 (FHCD…RFVH), 457-479 (HKCP…MLTH), 485-507 (YSCT…RLTH), 513-535 (YKCQ…QYVH), 541-563 (YKCN…QYHH), and 569-591 (YKCQ…QLGH). The segment at 597–619 (HRCRECGTNFPSVQRLQDHRCSK) adopts a C2H2-type 15; degenerate zinc-finger fold. 5 consecutive C2H2-type zinc fingers follow at residues 628-651 (LECP…AAQH), 681-703 (LECS…RRIH), 709-731 (YPCP…RRLH), 737-759 (FKCD…KRIH), and 765-787 (HSCP…RKLH). A disordered region spans residues 648-678 (AAQHSGNKRSNVSSGKGTPVLPRNKLKGGGG). The span at 651–663 (HSGNKRSNVSSGK) shows a compositional bias: polar residues.

Belongs to the krueppel C2H2-type zinc-finger protein family.

Its subcellular location is the nucleus. Its function is as follows. May be involved in transcriptional regulation. The chain is Zinc finger protein 574 (znf574) from Xenopus tropicalis (Western clawed frog).